Reading from the N-terminus, the 163-residue chain is Interleukin-17F (163 aa).

The N-terminal stretch at 1-30 (MTVKTLHGPAMVKYLLLSILGLAFLSEAAA) is a signal peptide. N-linked (GlcNAc...) asparagine glycosylation occurs at Asn-83. 2 disulfide bridges follow: Cys-102–Cys-152 and Cys-107–Cys-154.

The protein belongs to the IL-17 family. In terms of assembly, homodimer; disulfide-linked. Heterodimer with IL17A (IL17A-IL17F). Forms complexes with IL17RA and IL17RC receptors with 2:1 binding stoichiometry: two receptor chains for one interleukin molecule. IL17F homodimer forms predominantly complexes with IL17RC homodimer, whereas IL17A-IL17F favors complexes with IL17RA-IL17RC. IL17RA and IL17RC chains cannot distinguish between IL17A and IL17F molecules, potentially enabling the formation of topologically distinct complexes. As to expression, expressed in T-helper 1 and T-helper 2 cells, basophils and mast cells.

The protein resides in the secreted. In terms of biological role, effector cytokine of innate and adaptive immune system involved in antimicrobial host defense and maintenance of tissue integrity. IL17A-IL17F signals via IL17RA-IL17RC heterodimeric receptor complex, triggering homotypic interaction of IL17RA and IL17RC chains with TRAF3IP2 adapter through SEFIR domains. This leads to downstream TRAF6-mediated activation of NF-kappa-B and MAPkinase pathways ultimately resulting in transcriptional activation of cytokines, chemokines, antimicrobial peptides and matrix metalloproteinases, with potential strong immune inflammation. IL17A-IL17F is primarily involved in host defense against extracellular bacteria and fungi by inducing neutrophilic inflammation. As signature effector cytokine of T-helper 17 cells (Th17), primarily induces neutrophil activation and recruitment at infection and inflammatory sites. Stimulates the production of antimicrobial beta-defensins DEFB1, DEFB103A, and DEFB104A by mucosal epithelial cells, limiting the entry of microbes through the epithelial barriers. IL17F homodimer can signal via IL17RC homodimeric receptor complex, triggering downstream activation of TRAF6 and NF-kappa-B signaling pathway. Via IL17RC induces transcriptional activation of IL33, a potent cytokine that stimulates group 2 innate lymphoid cells and adaptive T-helper 2 cells involved in pulmonary allergic response to fungi. Likely via IL17RC, promotes sympathetic innervation of peripheral organs by coordinating the communication between gamma-delta T cells and parenchymal cells. Stimulates sympathetic innervation of thermogenic adipose tissue by driving TGFB1 expression. Regulates the composition of intestinal microbiota and immune tolerance by inducing antimicrobial proteins that specifically control the growth of commensal Firmicutes and Bacteroidetes. The chain is Interleukin-17F (IL17F) from Homo sapiens (Human).